We begin with the raw amino-acid sequence, 1345 residues long: DNA-directed RNA polymerase subunit beta' (1345 aa).

Positions 60, 62, 75, and 78 each coordinate Zn(2+). Residues Asp536, Asp538, and Asp540 each coordinate Mg(2+). Zn(2+)-binding residues include Cys895, Cys974, Cys981, and Cys984. The tract at residues Asp1325–Lys1345 is disordered. A compositionally biased stretch (basic and acidic residues) spans Asp1335 to Lys1345.

This sequence belongs to the RNA polymerase beta' chain family. In terms of assembly, the RNAP catalytic core consists of 2 alpha, 1 beta, 1 beta' and 1 omega subunit. When a sigma factor is associated with the core the holoenzyme is formed, which can initiate transcription. It depends on Mg(2+) as a cofactor. The cofactor is Zn(2+).

It carries out the reaction RNA(n) + a ribonucleoside 5'-triphosphate = RNA(n+1) + diphosphate. DNA-dependent RNA polymerase catalyzes the transcription of DNA into RNA using the four ribonucleoside triphosphates as substrates. In Bifidobacterium animalis subsp. lactis (strain AD011), this protein is DNA-directed RNA polymerase subunit beta'.